Here is a 258-residue protein sequence, read N- to C-terminus: Imidazole glycerol phosphate synthase subunit HisF (258 aa).

Catalysis depends on residues D11 and D130.

The protein belongs to the HisA/HisF family. As to quaternary structure, heterodimer of HisH and HisF.

Its subcellular location is the cytoplasm. The catalysed reaction is 5-[(5-phospho-1-deoxy-D-ribulos-1-ylimino)methylamino]-1-(5-phospho-beta-D-ribosyl)imidazole-4-carboxamide + L-glutamine = D-erythro-1-(imidazol-4-yl)glycerol 3-phosphate + 5-amino-1-(5-phospho-beta-D-ribosyl)imidazole-4-carboxamide + L-glutamate + H(+). It participates in amino-acid biosynthesis; L-histidine biosynthesis; L-histidine from 5-phospho-alpha-D-ribose 1-diphosphate: step 5/9. IGPS catalyzes the conversion of PRFAR and glutamine to IGP, AICAR and glutamate. The HisF subunit catalyzes the cyclization activity that produces IGP and AICAR from PRFAR using the ammonia provided by the HisH subunit. This is Imidazole glycerol phosphate synthase subunit HisF from Blochmanniella floridana.